The chain runs to 328 residues: Ethanol acetyltransferase 1 (328 aa).

In terms of domain architecture, AB hydrolase-1 spans 39-309 (PAIINIHGLL…TGHNLLLENP (271 aa)). Active-site charge relay system residues include serine 115, aspartate 139, and histidine 302.

It belongs to the AB hydrolase superfamily.

It localises to the mitochondrion. The catalysed reaction is ethanol + acetyl-CoA = ethyl acetate + CoA. It catalyses the reaction acetyl-CoA + H2O = acetate + CoA + H(+). It carries out the reaction ethyl acetate + H2O = ethanol + acetate + H(+). Its function is as follows. Alcohol acetyltransferase that catalyzes the synthesis of ethyl acetate from ethanol and acetyl-CoA. Can also function as a thioesterase by hydrolyzing acetyl-CoA in the absence of ethanol, as well as esterase hydrolyzing ethyl acetate. The sequence is that of Ethanol acetyltransferase 1 from Saccharomyces cerevisiae (strain ATCC 204508 / S288c) (Baker's yeast).